A 129-amino-acid chain; its full sequence is MVRIAGTDIPDNKQVYFSLQYIFGIGPARSEKVLVQAGVDKAIRVNKLTDEEINRLREIIDKEYRVEGDLRKEIALNIKRLIDIGCYRGNRHKHNLPVRGQRTKTNARTRRGPRKTVAGRGQKRGATKK.

The span at 92-114 (HKHNLPVRGQRTKTNARTRRGPR) shows a compositional bias: basic residues. The interval 92–129 (HKHNLPVRGQRTKTNARTRRGPRKTVAGRGQKRGATKK) is disordered.

It belongs to the universal ribosomal protein uS13 family. Part of the 30S ribosomal subunit. Forms a loose heterodimer with protein S19. Forms two bridges to the 50S subunit in the 70S ribosome.

In terms of biological role, located at the top of the head of the 30S subunit, it contacts several helices of the 16S rRNA. In the 70S ribosome it contacts the 23S rRNA (bridge B1a) and protein L5 of the 50S subunit (bridge B1b), connecting the 2 subunits; these bridges are implicated in subunit movement. Contacts the tRNAs in the A and P-sites. The protein is Small ribosomal subunit protein uS13 of Dehalococcoides mccartyi (strain ATCC BAA-2266 / KCTC 15142 / 195) (Dehalococcoides ethenogenes (strain 195)).